Reading from the N-terminus, the 187-residue chain is Protein GrpE (187 aa).

The tract at residues 1-25 is disordered; it reads MADEQNLDNRAPEETPAAEGTSAGE.

Belongs to the GrpE family. As to quaternary structure, homodimer.

Its subcellular location is the cytoplasm. In terms of biological role, participates actively in the response to hyperosmotic and heat shock by preventing the aggregation of stress-denatured proteins, in association with DnaK and GrpE. It is the nucleotide exchange factor for DnaK and may function as a thermosensor. Unfolded proteins bind initially to DnaJ; upon interaction with the DnaJ-bound protein, DnaK hydrolyzes its bound ATP, resulting in the formation of a stable complex. GrpE releases ADP from DnaK; ATP binding to DnaK triggers the release of the substrate protein, thus completing the reaction cycle. Several rounds of ATP-dependent interactions between DnaJ, DnaK and GrpE are required for fully efficient folding. The polypeptide is Protein GrpE (Azotobacter vinelandii (strain DJ / ATCC BAA-1303)).